The primary structure comprises 642 residues: G protein-coupled receptor kinase 1 (642 aa).

An N-terminal region spans residues 1–202; sequence MEIENIVANT…LEKRPVDKHT (202 aa). The region spanning 52–188 is the RGS domain; it reads YAFVVEKQPI…AESMYFHRFL (137 aa). A Protein kinase domain is found at 203–470; sequence FRLYRVLGKG…AEEIRAHPFF (268 aa). Residues 209–217 and lysine 232 contribute to the ATP site; that span reads LGKGGFGEV. The active-site Proton acceptor is the aspartate 328. The AGC-kinase C-terminal domain occupies 480-545; the sequence is EPVPWKKMEA…GCVSIPWQSE (66 aa). A disordered region spans residues 612 to 642; it reads VEQQQPPKTSTQTPAVRSSRAASASGRTLVI. Residues 614–636 are compositionally biased toward low complexity; sequence QQQPPKTSTQTPAVRSSRAASAS.

This sequence belongs to the protein kinase superfamily. AGC Ser/Thr protein kinase family. GPRK subfamily.

The enzyme catalyses [G-protein-coupled receptor] + ATP = [G-protein-coupled receptor]-phosphate + ADP + H(+). Functionally, specifically phosphorylates the activated forms of G protein-coupled receptors. This is G protein-coupled receptor kinase 1 (grk-1) from Caenorhabditis elegans.